The following is a 224-amino-acid chain: Deoxyribose-phosphate aldolase (224 aa).

The Proton donor/acceptor role is filled by Asp94. Lys156 serves as the catalytic Schiff-base intermediate with acetaldehyde. Residue Lys184 is the Proton donor/acceptor of the active site.

The protein belongs to the DeoC/FbaB aldolase family. DeoC type 1 subfamily.

Its subcellular location is the cytoplasm. It catalyses the reaction 2-deoxy-D-ribose 5-phosphate = D-glyceraldehyde 3-phosphate + acetaldehyde. The protein operates within carbohydrate degradation; 2-deoxy-D-ribose 1-phosphate degradation; D-glyceraldehyde 3-phosphate and acetaldehyde from 2-deoxy-alpha-D-ribose 1-phosphate: step 2/2. In terms of biological role, catalyzes a reversible aldol reaction between acetaldehyde and D-glyceraldehyde 3-phosphate to generate 2-deoxy-D-ribose 5-phosphate. The sequence is that of Deoxyribose-phosphate aldolase from Methanocella arvoryzae (strain DSM 22066 / NBRC 105507 / MRE50).